We begin with the raw amino-acid sequence, 212 residues long: uncharacterized protein (212 aa).

The next 2 helical transmembrane spans lie at 54–74 (LCFALTLLLTLGGTISAGYAG) and 79–99 (WIICGIGLGIIVLTLILALLL).

The protein localises to the cell membrane. This is an uncharacterized protein from Chlamydia pneumoniae (Chlamydophila pneumoniae).